A 230-amino-acid chain; its full sequence is 3-beta-hydroxysteroid-Delta(8),Delta(7)-isomerase (230 aa).

T2 is modified (N-acetylthreonine). Transmembrane regions (helical) follow at residues 29–49, 66–86, 121–141, and 185–205; these read WHIL…TWLL, LCWF…FVLY, METI…IAFL, and FWFY…VLVL. In terms of domain architecture, EXPERA spans 61–204; that stretch reads WRRLSLCWFA…LWLVLPGVLV (144 aa).

The protein belongs to the EBP family.

Its subcellular location is the endoplasmic reticulum membrane. The protein localises to the nucleus envelope. The protein resides in the cytoplasmic vesicle. The enzyme catalyses lathosterol = 5alpha-cholest-8-en-3beta-ol. It catalyses the reaction zymosterol = 5alpha-cholesta-7,24-dien-3beta-ol. It carries out the reaction 5,6alpha-epoxy-5alpha-cholestan-3beta-ol + H2O = 5alpha-cholestane-3beta,5,6beta-triol. The catalysed reaction is 5,6beta-epoxy-5beta-cholestan-3beta-ol + H2O = 5alpha-cholestane-3beta,5,6beta-triol. Its pathway is steroid biosynthesis; cholesterol biosynthesis. With respect to regulation, cholestenol Delta-isomerase and cholesterol-5,6-epoxide hydrolase (ChEH) activities are inhibited by tamoxifen and the selective AEBS ligand (4-benzyl-phenoxy)-ethyl-N-pyrrolidine (PBPE). ChEH activity is inhibited by oleic acid. Isomerase that catalyzes the conversion of Delta(8)-sterols to their corresponding Delta(7)-isomers a catalytic step in the postlanosterol biosynthesis of cholesterol. Its function is as follows. Component of the microsomal antiestrogen binding site (AEBS), a multiproteic complex at the ER membrane that consists of an association between EBP and 7-dehydrocholesterol reductase/DHCR7. This complex is responsible for cholesterol-5,6-epoxide hydrolase (ChEH) activity, which consists in the hydration of cholesterol-5,6-epoxides (5,6-EC) into cholestane-3beta,5alpha,6beta-triol (CT). The precise role of each component of this complex has not been described yet. The protein is 3-beta-hydroxysteroid-Delta(8),Delta(7)-isomerase of Homo sapiens (Human).